We begin with the raw amino-acid sequence, 667 residues long: DNA ligase (667 aa).

NAD(+) contacts are provided by residues 32–36 (DSVYD), 81–82 (SL), and E111. The active-site N6-AMP-lysine intermediate is K113. NAD(+) is bound by residues R134, E168, K285, and K309. Residues C403, C406, C421, and C426 each contribute to the Zn(2+) site. In terms of domain architecture, BRCT spans 588–667 (VGDNPFAGKT…DNLIEQLNLI (80 aa)).

This sequence belongs to the NAD-dependent DNA ligase family. LigA subfamily. The cofactor is Mg(2+). Mn(2+) is required as a cofactor.

It carries out the reaction NAD(+) + (deoxyribonucleotide)n-3'-hydroxyl + 5'-phospho-(deoxyribonucleotide)m = (deoxyribonucleotide)n+m + AMP + beta-nicotinamide D-nucleotide.. DNA ligase that catalyzes the formation of phosphodiester linkages between 5'-phosphoryl and 3'-hydroxyl groups in double-stranded DNA using NAD as a coenzyme and as the energy source for the reaction. It is essential for DNA replication and repair of damaged DNA. The polypeptide is DNA ligase (Lysinibacillus sphaericus (strain C3-41)).